The primary structure comprises 101 residues: Co-chaperonin GroES (101 aa).

It belongs to the GroES chaperonin family. Heptamer of 7 subunits arranged in a ring. Interacts with the chaperonin GroEL.

It localises to the cytoplasm. Its function is as follows. Together with the chaperonin GroEL, plays an essential role in assisting protein folding. The GroEL-GroES system forms a nano-cage that allows encapsulation of the non-native substrate proteins and provides a physical environment optimized to promote and accelerate protein folding. GroES binds to the apical surface of the GroEL ring, thereby capping the opening of the GroEL channel. In Lawsonia intracellularis, this protein is Co-chaperonin GroES.